The primary structure comprises 764 residues: 1,4-alpha-glucan branching enzyme GlgB (764 aa).

Asp434 functions as the Nucleophile in the catalytic mechanism. The Proton donor role is filled by Glu487.

The protein belongs to the glycosyl hydrolase 13 family. GlgB subfamily. In terms of assembly, monomer.

It catalyses the reaction Transfers a segment of a (1-&gt;4)-alpha-D-glucan chain to a primary hydroxy group in a similar glucan chain.. It functions in the pathway glycan biosynthesis; glycogen biosynthesis. Functionally, catalyzes the formation of the alpha-1,6-glucosidic linkages in glycogen by scission of a 1,4-alpha-linked oligosaccharide from growing alpha-1,4-glucan chains and the subsequent attachment of the oligosaccharide to the alpha-1,6 position. This is 1,4-alpha-glucan branching enzyme GlgB from Nostoc sp. (strain PCC 7120 / SAG 25.82 / UTEX 2576).